A 90-amino-acid chain; its full sequence is MANTASAEKRNRQAQKRRARNVQVRTGVKSAVKKAREAITQGDGNAARDAFKAAARALEKASSKGVVHKNAASRKISRLAKAAAKVAAAK.

Residues 1–29 (MANTASAEKRNRQAQKRRARNVQVRTGVK) form a disordered region.

It belongs to the bacterial ribosomal protein bS20 family.

Functionally, binds directly to 16S ribosomal RNA. The protein is Small ribosomal subunit protein bS20 of Anaeromyxobacter sp. (strain Fw109-5).